Here is a 383-residue protein sequence, read N- to C-terminus: Lipid-A-disaccharide synthase (383 aa).

The protein belongs to the LpxB family.

It catalyses the reaction a lipid X + a UDP-2-N,3-O-bis[(3R)-3-hydroxyacyl]-alpha-D-glucosamine = a lipid A disaccharide + UDP + H(+). It participates in bacterial outer membrane biogenesis; LPS lipid A biosynthesis. In terms of biological role, condensation of UDP-2,3-diacylglucosamine and 2,3-diacylglucosamine-1-phosphate to form lipid A disaccharide, a precursor of lipid A, a phosphorylated glycolipid that anchors the lipopolysaccharide to the outer membrane of the cell. The sequence is that of Lipid-A-disaccharide synthase from Aliivibrio fischeri (strain MJ11) (Vibrio fischeri).